The sequence spans 147 residues: Hemoglobin subunit gamma-1 (147 aa).

G2 is subject to N-acetylglycine; in form Hb F1. A Globin domain is found at H3–H147. Phosphothreonine is present on T13. A phosphoserine mark is found at S45, S51, and S53. K60 carries the post-translational modification N6-acetyllysine. H64 is a heme b binding site. Residue K83 is modified to N6-acetyllysine. H93 is a binding site for heme b. The residue at position 94 (C94) is an S-nitrosocysteine. S140 carries the phosphoserine modification.

The protein belongs to the globin family. In terms of assembly, heterotetramer of two alpha chains and two gamma chains in fetal hemoglobin (Hb F). In the case of deletions affecting one or more of the alpha chains, the excess gamma chains form homotetramers that exhibit neither Bohr effect nor heme-heme cooperativity (hemoglobin Bart's). Post-translationally, acetylation of Gly-2 converts Hb F to the minor Hb F1. Red blood cells.

Its function is as follows. Gamma chains make up the fetal hemoglobin F, in combination with alpha chains. The polypeptide is Hemoglobin subunit gamma-1 (HBG1) (Homo sapiens (Human)).